Consider the following 236-residue polypeptide: UPF0177 protein YaiH (236 aa).

6 consecutive transmembrane segments (helical) span residues 16–36 (YFSL…ILGY), 51–71 (ATAT…GILI), 90–110 (ILFL…TFTY), 131–151 (IVFP…FEEA), 180–200 (TGAN…TLIY), and 210–230 (ILVH…LQTI).

The protein belongs to the UPF0177 family.

The protein resides in the cell membrane. In Lactococcus lactis subsp. lactis (strain IL1403) (Streptococcus lactis), this protein is UPF0177 protein YaiH (yaiH).